The sequence spans 174 residues: Bifunctional protein PyrR (174 aa).

Substrate-binding positions include 38 to 39, 95 to 103, and Arg128; these read SG and DDVLATGRT. The PRPP-binding motif lies at 91 to 103; it reads ILLVDDVLATGRT.

Belongs to the purine/pyrimidine phosphoribosyltransferase family. PyrR subfamily.

The catalysed reaction is UMP + diphosphate = 5-phospho-alpha-D-ribose 1-diphosphate + uracil. Its function is as follows. Regulates the transcription of the pyrimidine nucleotide (pyr) operon in response to exogenous pyrimidines. Also displays a weak uracil phosphoribosyltransferase activity which is not physiologically significant. The chain is Bifunctional protein PyrR from Ralstonia nicotianae (strain ATCC BAA-1114 / GMI1000) (Ralstonia solanacearum).